Consider the following 914-residue polypeptide: Calcium-activated chloride channel regulator 1 (914 aa).

An N-terminal signal peptide occupies residues 1–21; it reads MGPFKSSVFILILHLLEGALS. A metalloprotease domain region spans residues 46–199; the sequence is DETLIQQIKD…GITGTNVVKK (154 aa). Position 156 (histidine 156) interacts with Zn(2+). Glutamate 157 is a catalytic residue. Zn(2+) contacts are provided by histidine 160 and aspartate 167. Positions 306–475 constitute a VWFA domain; sequence IVCLVLDKSG…NGLIDAFGAL (170 aa). Asparagine 503, asparagine 585, asparagine 770, asparagine 804, asparagine 810, asparagine 831, asparagine 836, and asparagine 890 each carry an N-linked (GlcNAc...) asparagine glycan.

Belongs to the CLCR family. Glycosylated. In terms of processing, the 125-kDa product is autoproteolytically processed by the metalloprotease domain and yields to two cell-surface-associated subunits, a 90-kDa protein and a group of 37- to 41-kDa proteins. The cleavage is necessary for calcium-activated chloride channel (CaCC) activation activity. As to expression, highly expressed in small intestine and colon namely in intestinal basal crypt epithelia and goblet cells, and appendix. Weakly expressed in uterus, testis and kidney. Expressed in the airways epithelium of both asthmatic and healthy patients. Expressed in the bronchial epithelium, especially in mucus-producing goblet cells. Expressed in normal turbinate mucosa and nasal polyp. Expressed in.

It localises to the secreted. It is found in the extracellular space. The protein resides in the cell membrane. Functionally, may be involved in mediating calcium-activated chloride conductance. May play critical roles in goblet cell metaplasia, mucus hypersecretion, cystic fibrosis and AHR. May be involved in the regulation of mucus production and/or secretion by goblet cells. Involved in the regulation of tissue inflammation in the innate immune response. May play a role as a tumor suppressor. Induces MUC5AC. This Homo sapiens (Human) protein is Calcium-activated chloride channel regulator 1 (CLCA1).